An 884-amino-acid polypeptide reads, in one-letter code: Valine--tRNA ligase (884 aa).

The short motif at 47–57 is the 'HIGH' region element; the sequence is PNVTGALHIGH. The 'KMSKS' region signature appears at 525 to 529; the sequence is KMSKS. Residue K528 coordinates ATP. A coiled-coil region spans residues 812–884; the sequence is AVDFEAELAR…QQRFRDAIGK (73 aa).

Belongs to the class-I aminoacyl-tRNA synthetase family. ValS type 1 subfamily. Monomer.

It localises to the cytoplasm. It catalyses the reaction tRNA(Val) + L-valine + ATP = L-valyl-tRNA(Val) + AMP + diphosphate. Functionally, catalyzes the attachment of valine to tRNA(Val). As ValRS can inadvertently accommodate and process structurally similar amino acids such as threonine, to avoid such errors, it has a 'posttransfer' editing activity that hydrolyzes mischarged Thr-tRNA(Val) in a tRNA-dependent manner. The protein is Valine--tRNA ligase of Nitratidesulfovibrio vulgaris (strain ATCC 29579 / DSM 644 / CCUG 34227 / NCIMB 8303 / VKM B-1760 / Hildenborough) (Desulfovibrio vulgaris).